A 491-amino-acid polypeptide reads, in one-letter code: Equilibrative nucleobase transporter 1 (491 aa).

A helical membrane pass occupies residues 17–37 (LLECLGFAGVLFGWPSLVFVF). Asparagine 56 carries an N-linked (GlcNAc...) asparagine glycan. The next 5 helical transmembrane spans lie at 72–92 (LIFT…GYIF), 102–122 (LIAI…SAGS), 123–143 (AVLL…FLIT), 156–176 (STII…FLII), and 188–208 (ASFI…FLLM). N-linked (GlcNAc...) asparagine glycosylation is found at asparagine 220 and asparagine 229. At serine 253 the chain carries Phosphoserine. Position 258 is a phosphothreonine (threonine 258). Transmembrane regions (helical) follow at residues 279–299 (FAWH…FIGT), 319–339 (TNAF…GLLM), 356–376 (STLA…SLLC), 396–418 (ILQV…LAFP), 427–447 (GLVM…FTLI), and 456–476 (FYVN…PFLV).

It belongs to the SLC43A transporter (TC 2.A.1.44) family. Widely expressed with highest levels in the liver and lung, followed by the pancreas. Highly expressed in macrophages.

The protein localises to the basolateral cell membrane. The catalysed reaction is adenine(out) = adenine(in). It catalyses the reaction guanine(out) = guanine(in). It carries out the reaction hypoxanthine(out) = hypoxanthine(in). With respect to regulation, adenine transport is strongly inhibited by decynium-22. 6-mercaptopurine-transport is inhibited by 6-thioguanine, 6-methylmercaptopurine and decynium-22. In terms of biological role, sodium-independent purine-selective nucleobase transporter which mediates the equilibrative transport of extracellular purine nucleobases such as adenine, guanine and hypoxanthine. May regulate fatty acid (FA) transport in adipocytes, acting as a positive regulator of FA efflux and as a negative regulator of FA uptake. Its function is as follows. Sodium-independent purine-selective nucleobase transporter which mediates the equilibrative transport of extracellular purine nucleobase adenine. Mediates the influx and efflux of the purine nucleobase analog drug 6-mercaptopurine across the membrane. The sequence is that of Equilibrative nucleobase transporter 1 (SLC43A3) from Homo sapiens (Human).